The chain runs to 190 residues: Protein PLANT CADMIUM RESISTANCE 10 (190 aa).

Transmembrane regions (helical) follow at residues 78–98 and 108–125; these read LLGS…WALV and GALL…ACGY.

The protein belongs to the cornifelin family.

The protein resides in the membrane. Its function is as follows. May be involved in cadmium resistance. The chain is Protein PLANT CADMIUM RESISTANCE 10 (PCR10) from Arabidopsis thaliana (Mouse-ear cress).